The sequence spans 427 residues: Enolase 2 (427 aa).

Residue Gln-165 coordinates (2R)-2-phosphoglycerate. Residue Glu-207 is the Proton donor of the active site. Residues Asp-244, Glu-287, and Asp-314 each contribute to the Mg(2+) site. Positions 339, 368, 369, and 390 each coordinate (2R)-2-phosphoglycerate. Residue Lys-339 is the Proton acceptor of the active site.

This sequence belongs to the enolase family. Component of the RNA degradosome, a multiprotein complex involved in RNA processing and mRNA degradation. Mg(2+) is required as a cofactor.

The protein resides in the cytoplasm. It is found in the secreted. It localises to the cell surface. The enzyme catalyses (2R)-2-phosphoglycerate = phosphoenolpyruvate + H2O. Its pathway is carbohydrate degradation; glycolysis; pyruvate from D-glyceraldehyde 3-phosphate: step 4/5. Its function is as follows. Catalyzes the reversible conversion of 2-phosphoglycerate (2-PG) into phosphoenolpyruvate (PEP). It is essential for the degradation of carbohydrates via glycolysis. The protein is Enolase 2 of Pseudomonas syringae pv. syringae (strain B728a).